A 599-amino-acid polypeptide reads, in one-letter code: Elongation factor 4 (599 aa).

A tr-type G domain is found at 2-184 (KNIRNFSIIA…RLVRDIPPPQ (183 aa)). Residues 14-19 (DHGKST) and 131-134 (NKID) contribute to the GTP site.

This sequence belongs to the TRAFAC class translation factor GTPase superfamily. Classic translation factor GTPase family. LepA subfamily.

It is found in the cell inner membrane. It carries out the reaction GTP + H2O = GDP + phosphate + H(+). In terms of biological role, required for accurate and efficient protein synthesis under certain stress conditions. May act as a fidelity factor of the translation reaction, by catalyzing a one-codon backward translocation of tRNAs on improperly translocated ribosomes. Back-translocation proceeds from a post-translocation (POST) complex to a pre-translocation (PRE) complex, thus giving elongation factor G a second chance to translocate the tRNAs correctly. Binds to ribosomes in a GTP-dependent manner. The chain is Elongation factor 4 from Salmonella arizonae (strain ATCC BAA-731 / CDC346-86 / RSK2980).